The chain runs to 148 residues: [Ribosomal protein bS18]-alanine N-acetyltransferase (148 aa).

Positions Asn-2 to Ser-147 constitute an N-acetyltransferase domain. Residue Ile-69–Val-71 participates in acetyl-CoA binding. Glu-103 serves as the catalytic Proton acceptor. Asn-108 serves as a coordination point for acetyl-CoA. Catalysis depends on Tyr-115, which acts as the Proton donor.

Belongs to the acetyltransferase family. RimI subfamily.

It localises to the cytoplasm. It catalyses the reaction N-terminal L-alanyl-[ribosomal protein bS18] + acetyl-CoA = N-terminal N(alpha)-acetyl-L-alanyl-[ribosomal protein bS18] + CoA + H(+). In terms of biological role, acetylates the N-terminal alanine of ribosomal protein bS18. In Escherichia coli O157:H7, this protein is [Ribosomal protein bS18]-alanine N-acetyltransferase.